We begin with the raw amino-acid sequence, 349 residues long: Beta-glucanase (349 aa).

An N-terminal signal peptide occupies residues M1 to A27. Positions K28 to G197 constitute a GH16 domain. E79 (nucleophile) is an active-site residue. Residue E83 is the Proton donor of the active site. The tract at residues S258–I311 is disordered. The span at A270–A307 shows a compositional bias: low complexity. A run of 5 repeats spans residues P271 to A277, P278 to V284, P285 to V291, P292 to A298, and P301 to A307. The interval P271 to A307 is 5 X 7 AA tandem repeats of P-X-S-S-S-S-X.

It belongs to the glycosyl hydrolase 16 family.

It carries out the reaction Hydrolysis of (1-&gt;4)-beta-D-glucosidic linkages in beta-D-glucans containing (1-&gt;3)- and (1-&gt;4)-bonds.. The sequence is that of Beta-glucanase from Fibrobacter succinogenes (strain ATCC 19169 / S85).